Reading from the N-terminus, the 435-residue chain is Dual specificity protein kinase FUZ7 (435 aa).

Residues 1–61 (MLSSGAGSSI…TIGKSSAVTP (61 aa)) form a disordered region. Positions 46–59 (AASNASTIGKSSAV) are enriched in polar residues. In terms of domain architecture, Protein kinase spans 109–417 (LKTLSELGAG…PKDLTKHQYV (309 aa)). ATP contacts are provided by residues 115-123 (LGAGNGGTV) and K138. D231 serves as the catalytic Proton acceptor. The disordered stretch occupies residues 307–359 (NEEDDDSDADNNYTNEDLAGTLSPTKPAPMISLGQNEKQRRRKSKPAGVSLEG).

Belongs to the protein kinase superfamily. STE Ser/Thr protein kinase family. MAP kinase kinase subfamily.

The catalysed reaction is L-seryl-[protein] + ATP = O-phospho-L-seryl-[protein] + ADP + H(+). The enzyme catalyses L-threonyl-[protein] + ATP = O-phospho-L-threonyl-[protein] + ADP + H(+). It catalyses the reaction L-tyrosyl-[protein] + ATP = O-phospho-L-tyrosyl-[protein] + ADP + H(+). Protein kinase that is necessary for a-locus-dependent processes, such as conjugation tube formation, filament formation, and maintenance of filamentous growth, and for a-locus-independent processes, such as tumor induction and teliospore germination. This is Dual specificity protein kinase FUZ7 (FUZ7) from Mycosarcoma maydis (Corn smut fungus).